The chain runs to 355 residues: Ribosomal RNA large subunit methyltransferase M (355 aa).

S-adenosyl-L-methionine contacts are provided by residues serine 183, 216 to 219, aspartate 235, aspartate 255, and aspartate 271; that span reads SPGG. Lysine 300 acts as the Proton acceptor in catalysis.

Belongs to the class I-like SAM-binding methyltransferase superfamily. RNA methyltransferase RlmE family. RlmM subfamily. Monomer.

It localises to the cytoplasm. The enzyme catalyses cytidine(2498) in 23S rRNA + S-adenosyl-L-methionine = 2'-O-methylcytidine(2498) in 23S rRNA + S-adenosyl-L-homocysteine + H(+). In terms of biological role, catalyzes the 2'-O-methylation at nucleotide C2498 in 23S rRNA. In Pseudomonas putida (strain W619), this protein is Ribosomal RNA large subunit methyltransferase M.